Here is a 368-residue protein sequence, read N- to C-terminus: GDSL esterase/lipase At4g16230 (368 aa).

Positions 1 to 24 (MSLLVFLCQIIVLSVLFFSEVCLA) are cleaved as a signal peptide. The Nucleophile role is filled by S37. N-linked (GlcNAc...) asparagine glycosylation is found at N117 and N286. Catalysis depends on residues D329 and H332.

The protein belongs to the 'GDSL' lipolytic enzyme family.

It is found in the secreted. The chain is GDSL esterase/lipase At4g16230 from Arabidopsis thaliana (Mouse-ear cress).